Reading from the N-terminus, the 160-residue chain is Transcription elongation factor GreA (160 aa).

The stretch at 2-30 (SEKTYPMTLAEKEQLEQELEELKLVRRPE) forms a coiled coil.

It belongs to the GreA/GreB family.

Necessary for efficient RNA polymerase transcription elongation past template-encoded arresting sites. The arresting sites in DNA have the property of trapping a certain fraction of elongating RNA polymerases that pass through, resulting in locked ternary complexes. Cleavage of the nascent transcript by cleavage factors such as GreA or GreB allows the resumption of elongation from the new 3'terminus. GreA releases sequences of 2 to 3 nucleotides. In Streptococcus mutans serotype c (strain ATCC 700610 / UA159), this protein is Transcription elongation factor GreA.